The chain runs to 132 residues: Sodium/calcium exchanger regulatory protein 1 (132 aa).

(9Z)-hexadecenoate is bound by residues arginine 126 and tyrosine 128.

Belongs to the calycin superfamily. Fatty-acid binding protein (FABP) family. In terms of assembly, interacts with Na(+)/Ca(2+) exchanger NCXSQ1; ReP1-NCXSQ phosphorylation does not affect the interaction. In terms of processing, phosphorylated. Phosphorylation may result in the release of the bound fatty acid. In terms of tissue distribution, expressed in the optic nerve (at protein level).

It is found in the cytoplasm. The protein localises to the membrane. Binds and may transport fatty acids such as palmitoleate. Also binds poly-phosphoinositides including phosphatidylinositol 4-phosphate (PtdIns(4)P), phosphatidylinositol 4,5-bisphosphate (PtdIns(4,5)P2) and phosphatidylinositol 3,4,5-trisphosphate (PtdIns(3,4,5)P3), and phosphatidic acid. When phosphorylated, stimulates the activity of optic nerve Na(+)/Ca(2+) exchanger. This is Sodium/calcium exchanger regulatory protein 1 from Doryteuthis pealeii (Longfin inshore squid).